A 321-amino-acid polypeptide reads, in one-letter code: Oxidoreductase P35 (321 aa).

The protein belongs to the Gfo/Idh/MocA family.

It localises to the cell surface. Its function is as follows. Oxidoreductase that may be involved in ulvan degradation. Ulvan is the main polysaccharide component of the Ulvales (green seaweed) cell wall. It is composed of disaccharide building blocks comprising 3-sulfated rhamnose (Rha3S) linked to D-glucuronic acid (GlcA), L-iduronic acid (IduA), or D-xylose (Xyl). The chain is Oxidoreductase P35 from Formosa agariphila (strain DSM 15362 / KCTC 12365 / LMG 23005 / KMM 3901 / M-2Alg 35-1).